A 190-amino-acid polypeptide reads, in one-letter code: MASPDAPINLTNQFLIAMPGMADPTFSGTVVYLCEHNERGALGLVINRPIDIDLATLFDKIDLKLEIHPLAEQPVYYGGPVQTERGFVLHDAMGSYSSSLTVPGGLEMTTSKDVLEAVARGGGPQRFILTLGYAGWSAGQLEEEIGRNGWLTVQADPEIIFNVPAEERFAAALRLLGINPAMLSGEAGHA.

Belongs to the UPF0301 (AlgH) family.

This chain is UPF0301 protein RSc0675, found in Ralstonia nicotianae (strain ATCC BAA-1114 / GMI1000) (Ralstonia solanacearum).